Reading from the N-terminus, the 476-residue chain is RNA-splicing ligase RtcB homolog (476 aa).

Residues Asp90, Cys93, His198, His230, and His324 each coordinate Mn(2+). GMP is bound at residue 197 to 201 (NHYAE). Residues 324 to 325 (HN), 373 to 376 (GGTM), Ser380, 399 to 402 (HGAG), and Lys475 each bind GMP. The active-site GMP-histidine intermediate is the His399.

It belongs to the RtcB family. In terms of assembly, catalytic component of the tRNA-splicing ligase complex. Mn(2+) serves as cofactor.

The catalysed reaction is a 3'-end 3'-phospho-ribonucleotide-RNA + a 5'-end dephospho-ribonucleoside-RNA + GTP = a ribonucleotidyl-ribonucleotide-RNA + GMP + diphosphate. The enzyme catalyses a 3'-end 2',3'-cyclophospho-ribonucleotide-RNA + a 5'-end dephospho-ribonucleoside-RNA + GTP + H2O = a ribonucleotidyl-ribonucleotide-RNA + GMP + diphosphate + H(+). Catalytic subunit of the tRNA-splicing ligase complex that acts by directly joining spliced tRNA halves to mature-sized tRNAs by incorporating the precursor-derived splice junction phosphate into the mature tRNA as a canonical 3',5'-phosphodiester. May act as an RNA ligase with broad substrate specificity, and may function toward other RNAs. The chain is RNA-splicing ligase RtcB homolog from Chlamydomonas reinhardtii (Chlamydomonas smithii).